The following is a 259-amino-acid chain: uncharacterized protein (259 aa).

The active site involves Glu46.

Belongs to the PhzF family.

This is an uncharacterized protein from Pseudomonas aeruginosa (strain ATCC 15692 / DSM 22644 / CIP 104116 / JCM 14847 / LMG 12228 / 1C / PRS 101 / PAO1).